The sequence spans 149 residues: Macrodomain Ter protein (149 aa).

It belongs to the MatP family. Homodimer.

It localises to the cytoplasm. In terms of biological role, required for spatial organization of the terminus region of the chromosome (Ter macrodomain) during the cell cycle. Prevents early segregation of duplicated Ter macrodomains during cell division. Binds specifically to matS, which is a 13 bp signature motif repeated within the Ter macrodomain. The protein is Macrodomain Ter protein of Vibrio parahaemolyticus serotype O3:K6 (strain RIMD 2210633).